Reading from the N-terminus, the 89-residue chain is uncharacterized protein (89 aa).

This is an uncharacterized protein from Treponema pallidum (strain Nichols).